Here is an 805-residue protein sequence, read N- to C-terminus: Zinc finger CCCH domain-containing protein 11B (805 aa).

C3H1-type zinc fingers lie at residues 2 to 29 (PNQG…HCEA) and 31 to 57 (LGNE…HMEI). Disordered regions lie at residues 140–194 (KVES…GLRV), 223–351 (KKMK…DKVN), 364–433 (MLLE…TCIK), 449–468 (IVAS…SMQE), 481–506 (KALR…PGAR), and 715–805 (VTVP…PLEL). The segment covering 160 to 175 (ADDDEDDDDQFSEEGD) has biased composition (acidic residues). Residues 364 to 390 (MLLERASQKHGESQTKLKTEGPSKTDD) are compositionally biased toward basic and acidic residues. Residues 391–402 (STSGARSSSTIR) show a composition bias toward polar residues. Residues 403–423 (IKTFSEVLAEEEHRQQEAERQ) adopt a coiled-coil conformation. Basic and acidic residues-rich tracts occupy residues 412 to 433 (EEEH…TCIK) and 455 to 468 (QSEE…SMQE). Low complexity-rich tracts occupy residues 486–498 (QQSS…SPSQ) and 730–749 (PPTQ…PSSS). Polar residues predominate over residues 750 to 763 (QMSMKTRRLSSAST). The span at 789–805 (EIDLDPGKDEDDLPLEL) shows a compositional bias: acidic residues.

In terms of biological role, may play a role in mRNA transport. This chain is Zinc finger CCCH domain-containing protein 11B, found in Homo sapiens (Human).